Consider the following 422-residue polypeptide: Electron transfer flavoprotein subunit alpha (422 aa).

Residues 61–80 are disordered; sequence KRIDRSGTQQGAGGGKASAS. FAD contacts are provided by residues 329 to 330, 343 to 347, 360 to 367, and asparagine 381; these read SR, QVGAT, and GISGAIQH.

The protein belongs to the ETF alpha-subunit/FixB family. As to quaternary structure, heterodimer of an alpha and a beta subunit. It depends on FAD as a cofactor.

In terms of biological role, participates in the electron transfer process during N,N-dimethylglycine (DMG) degradation to sarcosine. This chain is Electron transfer flavoprotein subunit alpha, found in Chromohalobacter salexigens (strain ATCC BAA-138 / DSM 3043 / CIP 106854 / NCIMB 13768 / 1H11).